Here is a 481-residue protein sequence, read N- to C-terminus: MVGPRTRGYAIHKLGFCSVVMLGINSIIGAGIFLTPGEVIGLAGPFAPMAYVLAGIFAGVVAIVFATAARYVRTNGASYAYTTAAFGRRIGIYVGVTHAITASIAWGVLASFFVSTLLRVAFPDKAWADAEQLFSVKTLTFLGFIGVLLAINLFGNRAIKWANGTSTVGKAFALSAFIVGGLWIITTQHVNNYATAWSAYSATPYSLLGVAEIGKGTFSSMALATIVALYAFTGFESIANAAEEMDAPDRNLPRAIPIAIFSVGAIYLLTLTVAMLLGSNKIAASDDTVKLAAAIGNATFRTIIVVGALISMFGINVAASFGAPRLWTALADSGVLPTRLSRKNQYDVPMVSFAITASLALAFPLALRFDNLHLTGLAVIARFVQFIIVPIALIALARSQAVEHAAVRRNAFTDKVLPLVAIVVSVGLAVSYDYRCIFLVRGGPNYFSIALIVITFIVVPAMAYLHYYRIIRRVGDRPSTR.

The next 11 membrane-spanning stretches (helical) occupy residues 14 to 34 (LGFCSVVMLGINSIIGAGIFL), 46 to 66 (FAPMAYVLAGIFAGVVAIVFA), 90 to 110 (IGIYVGVTHAITASIAWGVLA), 134 to 154 (FSVKTLTFLGFIGVLLAINLF), 167 to 187 (TVGKAFALSAFIVGGLWIITT), 218 to 238 (FSSMALATIVALYAFTGFESI), 258 to 278 (IAIFSVGAIYLLTLTVAMLLG), 303 to 323 (IIVVGALISMFGINVAASFGA), 377 to 397 (LAVIARFVQFIIVPIALIALA), 411 to 431 (AFTDKVLPLVAIVVSVGLAVS), and 446 to 466 (YFSIALIVITFIVVPAMAYLH).

It belongs to the amino acid-polyamine-organocation (APC) superfamily.

It localises to the cell membrane. Its function is as follows. Probable amino-acid or metabolite transport protein. This is an uncharacterized protein from Mycobacterium tuberculosis (strain CDC 1551 / Oshkosh).